Reading from the N-terminus, the 546-residue chain is Amidophosphoribosyltransferase (546 aa).

Residues 1–26 (MSAPQQQQQSQQKQQQHVRVVEQQQV) are compositionally biased toward low complexity. Residues 1–39 (MSAPQQQQQSQQKQQQHVRVVEQQQVEPAEAVTSSMESE) form a disordered region. Residues 1-53 (MSAPQQQQQSQQKQQQHVRVVEQQQVEPAEAVTSSMESESISASKELTGLTHE) constitute a propeptide that is removed on maturation. C54 (nucleophile) is an active-site residue. The region spanning 54-302 (CGVFGAIACG…PGEIVELSRS (249 aa)) is the Glutamine amidotransferase type-2 domain. S113 is modified (phosphoserine). T114 carries the phosphothreonine modification. Position 120 is a phosphoserine (S120). Position 321 (C321) interacts with [4Fe-4S] cluster. Mg(2+)-binding residues include S368, D430, and D431. [4Fe-4S] cluster contacts are provided by C467, C528, and C531.

In the C-terminal section; belongs to the purine/pyrimidine phosphoribosyltransferase family. Requires Mg(2+) as cofactor. [4Fe-4S] cluster is required as a cofactor.

It carries out the reaction 5-phospho-beta-D-ribosylamine + L-glutamate + diphosphate = 5-phospho-alpha-D-ribose 1-diphosphate + L-glutamine + H2O. It participates in purine metabolism; IMP biosynthesis via de novo pathway; N(1)-(5-phospho-D-ribosyl)glycinamide from 5-phospho-alpha-D-ribose 1-diphosphate: step 1/2. Its function is as follows. Involved in the first step (and regulatory point) of the de novo biosynthesis of purine nucleotides, where it catalyzes the transfer of glutamine amide to 5-phospho-alpha-D-ribose 1-diphosphate. The polypeptide is Amidophosphoribosyltransferase (Prat) (Drosophila melanogaster (Fruit fly)).